The sequence spans 462 residues: Cysteine--tRNA ligase (462 aa).

Cysteine 24 lines the Zn(2+) pocket. A 'HIGH' region motif is present at residues 26 to 36; it reads PTVYDDAHLGH. Zn(2+)-binding residues include cysteine 199, histidine 224, and glutamate 228. The 'KMSKS' region signature appears at 256 to 260; sequence KMSKS. Residue lysine 259 coordinates ATP.

This sequence belongs to the class-I aminoacyl-tRNA synthetase family. In terms of assembly, monomer. Zn(2+) is required as a cofactor.

The protein resides in the cytoplasm. It carries out the reaction tRNA(Cys) + L-cysteine + ATP = L-cysteinyl-tRNA(Cys) + AMP + diphosphate. This is Cysteine--tRNA ligase from Campylobacter jejuni subsp. jejuni serotype O:23/36 (strain 81-176).